Consider the following 252-residue polypeptide: Zinc finger protein 511 (252 aa).

3 C2H2-type zinc fingers span residues Phe80 to His105, Asn107 to His130, and Tyr144 to His169. The disordered stretch occupies residues Phe177–Arg221. The residue at position 240 (Arg240) is an Omega-N-methylarginine.

It belongs to the krueppel C2H2-type zinc-finger protein family.

The protein resides in the nucleus. Its function is as follows. May be involved in transcriptional regulation. This is Zinc finger protein 511 from Homo sapiens (Human).